Reading from the N-terminus, the 1090-residue chain is DNA damage-binding protein 1 (1090 aa).

This sequence belongs to the DDB1 family. In terms of assembly, component of the UV-DDB complex, which is composed of DDB1 and DDB2. In terms of tissue distribution, expressed in proliferating tissues. Highly expressed in shoot apical meristem (SAM). Expressed in roots, young leaves, flag leaves, and panicles. Not detected in mature leaves.

Its subcellular location is the nucleus. In terms of biological role, required for DNA repair. Binds to DDB2 to form the UV-damaged DNA-binding protein complex (the UV-DDB complex). The UV-DDB complex may recognize UV-induced DNA damage and recruit proteins of the nucleotide excision repair pathway (the NER pathway) to initiate DNA repair. May function as the substrate recognition module for a DCX (DDB1-CUL4-X-box) E3 ubiquitin-protein ligase complex. The protein is DNA damage-binding protein 1 of Oryza sativa subsp. japonica (Rice).